Here is a 1035-residue protein sequence, read N- to C-terminus: Isoleucine--tRNA ligase (1035 aa).

Positions 48–58 (PTANGRPHVGH) match the 'HIGH' region motif. A 'KMSKS' region motif is present at residues 589–593 (KMSKH). ATP is bound at residue K592.

Belongs to the class-I aminoacyl-tRNA synthetase family. IleS type 2 subfamily. Monomer. It depends on Zn(2+) as a cofactor.

It localises to the cytoplasm. The enzyme catalyses tRNA(Ile) + L-isoleucine + ATP = L-isoleucyl-tRNA(Ile) + AMP + diphosphate. Functionally, catalyzes the attachment of isoleucine to tRNA(Ile). As IleRS can inadvertently accommodate and process structurally similar amino acids such as valine, to avoid such errors it has two additional distinct tRNA(Ile)-dependent editing activities. One activity is designated as 'pretransfer' editing and involves the hydrolysis of activated Val-AMP. The other activity is designated 'posttransfer' editing and involves deacylation of mischarged Val-tRNA(Ile). The sequence is that of Isoleucine--tRNA ligase from Clostridium acetobutylicum (strain ATCC 824 / DSM 792 / JCM 1419 / IAM 19013 / LMG 5710 / NBRC 13948 / NRRL B-527 / VKM B-1787 / 2291 / W).